Reading from the N-terminus, the 280-residue chain is F420-dependent methylenetetrahydromethanopterin dehydrogenase (280 aa).

It belongs to the MTD family.

The catalysed reaction is 5,10-methylenetetrahydromethanopterin + oxidized coenzyme F420-(gamma-L-Glu)(n) + 2 H(+) = 5,10-methenyl-5,6,7,8-tetrahydromethanopterin + reduced coenzyme F420-(gamma-L-Glu)(n). It functions in the pathway one-carbon metabolism; methanogenesis from CO(2); 5,10-methylene-5,6,7,8-tetrahydromethanopterin from 5,10-methenyl-5,6,7,8-tetrahydromethanopterin (coenzyme F420 route): step 1/1. In terms of biological role, catalyzes the reversible reduction of methenyl-H(4)MPT(+) to methylene-H(4)MPT. This is F420-dependent methylenetetrahydromethanopterin dehydrogenase from Methanocorpusculum labreanum (strain ATCC 43576 / DSM 4855 / Z).